A 391-amino-acid polypeptide reads, in one-letter code: 3-ketoacyl-CoA thiolase (391 aa).

The active-site Acyl-thioester intermediate is Cys95. Residues His347 and Cys377 each act as proton acceptor in the active site.

The protein belongs to the thiolase-like superfamily. Thiolase family. In terms of assembly, heterotetramer of two alpha chains (FadB) and two beta chains (FadA).

The protein localises to the cytoplasm. The catalysed reaction is an acyl-CoA + acetyl-CoA = a 3-oxoacyl-CoA + CoA. Its pathway is lipid metabolism; fatty acid beta-oxidation. Functionally, catalyzes the final step of fatty acid oxidation in which acetyl-CoA is released and the CoA ester of a fatty acid two carbons shorter is formed. This is 3-ketoacyl-CoA thiolase from Pseudomonas entomophila (strain L48).